The chain runs to 1959 residues: Sodium channel protein type 10 subunit alpha (1959 aa).

The Cytoplasmic segment spans residues 1-125 (MEFPIGSVGT…FNLIRRTAIK (125 aa)). The disordered stretch occupies residues 30–53 (AHGAAKKARAKHGERKGQDEKPRP). A compositionally biased stretch (basic residues) spans 33–43 (AAKKARAKHGE). The segment covering 44 to 53 (RKGQDEKPRP) has biased composition (basic and acidic residues). An I repeat occupies 116 to 404 (FNLIRRTAIK…VTMAYEEQNQ (289 aa)). Residues 126-149 (VSVHAWFSIFITITILFNCVCMTQ) traverse the membrane as a helical segment. At 150–154 (NDLPE) the chain is on the extracellular side. The helical transmembrane segment at 155 to 174 (KIEYAFTVIYTFEALIKILA) threads the bilayer. Residues 175–187 (RGFCLNEFTYLRD) are Cytoplasmic-facing. Residues 188 to 206 (PWNWLDFSVITLAYVGAAI) form a helical membrane-spanning segment. The Extracellular segment spans residues 207 to 212 (DLRGIS). Residues 213 to 232 (GLRTFRVLRALKTVSVIPGL) traverse the membrane as a helical; Voltage-sensor segment. Topologically, residues 233 to 248 (KVIVGALIHSVRKLAD) are cytoplasmic. A helical transmembrane segment spans residues 249–272 (VTILTVFCLSVFALVGLQLFKGNL). Residues 273–340 (KNKCIKRSTD…PDFNYTSFDS (68 aa)) are Extracellular-facing. Cysteine 276 and cysteine 318 form a disulfide bridge. Asparagine 288, asparagine 311, and asparagine 334 each carry an N-linked (GlcNAc...) asparagine glycan. Residues 341-365 (FAWAFLSLFRLMTQDSWERLYQQTL) constitute an intramembrane region (pore-forming). Over 366–372 (RASGKMY) the chain is Extracellular. A helical transmembrane segment spans residues 373-398 (MVFFVLVIFLGSFYLVNLILAVVTMA). Residues 399–659 (YEEQNQATIA…KWMKFKMVLF (261 aa)) lie on the Cytoplasmic side of the membrane. Phosphoserine occurs at positions 440, 443, 466, and 478. Disordered regions lie at residues 442 to 484 (HSHN…YNQR) and 510 to 578 (SQDV…ELTT). Polar residues predominate over residues 475-484 (SPQSDPYNQR). Residues 523 to 533 (GVFHGDHESHR) are compositionally biased toward basic and acidic residues. Serine 612 and serine 615 each carry phosphoserine. The stretch at 647 to 911 (CCPKWMKFKM…EDDGEVNNLQ (265 aa)) is one II repeat. A helical membrane pass occupies residues 660-684 (ELVTDPFAELTITLCIVVNTIFMAM). At 685-695 (EHYPMTDAFDA) the chain is on the extracellular side. Residues 696 to 719 (MLQAGNIVFTVFFTMEMAFKIIAF) traverse the membrane as a helical segment. The Cytoplasmic portion of the chain corresponds to 720–727 (DPYYYFQK). Residues 728-747 (KWNVFDCVIVTVSLLELSIA) form a helical membrane-spanning segment. Residues 748 to 753 (KKGSLS) lie on the Extracellular side of the membrane. A helical; Voltage-sensor membrane pass occupies residues 754–773 (VLRTFRLLRVFKLAKSWPTL). At 774–789 (NTLIKIIGNSVGALGN) the chain is on the cytoplasmic side. A helical transmembrane segment spans residues 790–810 (LTFILAIIVFIFALVGKQLLG). Over 811-834 (EDYGCRKDGTALWNEGQLRWHMCD) the chain is Extracellular. Positions 835 to 855 (FFHSFLVIFRILCGEWIENMW) form an intramembrane region, pore-forming. At 856–864 (VCMQVSEKS) the chain is on the extracellular side. Cysteines 857 and 866 form a disulfide. The helical transmembrane segment at 865 to 890 (ICLILFLTVMVLGNLVVLNLFIALLL) threads the bilayer. The Cytoplasmic segment spans residues 891-1149 (NSFSADNLTA…GWQVRKTCYR (259 aa)). Residues 1004–1016 (GESDLDELEEDIE) show a composition bias toward acidic residues. Disordered regions lie at residues 1004–1034 (GESD…QQDQ) and 1071–1097 (ATPQ…PDPE). An III repeat occupies 1142-1451 (QVRKTCYRIV…KKYYNAMKKL (310 aa)). A helical transmembrane segment spans residues 1150–1173 (IVEHSWFESFIIFMILLSSGALAF). The Extracellular portion of the chain corresponds to 1174-1186 (EDNYLEQKPRVKS). A helical transmembrane segment spans residues 1187–1212 (MLEYTDRVFTFIFVFEMLLKWVAYGF). Topologically, residues 1213–1218 (KKYFTN) are cytoplasmic. The chain crosses the membrane as a helical span at residues 1219-1240 (AWCWLDFLIVNISLTSLIAKIL). Residues 1241 to 1244 (DYSD) are Extracellular-facing. Residues 1245–1266 (VASLKALRTLRALRPLRALSRF) traverse the membrane as a helical; Voltage-sensor segment. Over 1267-1285 (EGMRVVVDALVGAIPSIMN) the chain is Cytoplasmic. Residues 1286 to 1313 (VLLVCLIFWLIFSIMGVNLFAGKFSRCI) form a helical membrane-spanning segment. Residues 1314–1355 (DTSNNPFSVVNSTIVNNKSECRNQNHTGHFFWVNVKVNFDNV) are Extracellular-facing. The pore-forming intramembrane region spans 1356–1377 (AMGYLALLQVATFKGWMDIMYA). Over 1378–1393 (AVDSREINSQPQWEDN) the chain is Extracellular. Residues 1394–1420 (LYMYLYFVVFIIFGGFFTLNLFVGVII) form a helical membrane-spanning segment. The Cytoplasmic segment spans residues 1421-1473 (DNFNQQKKKLGGQDIFMTEEQKKYYNAMKKLGSKKPQKPIPRPLNKYQGFVFD). Serine 1453 carries the post-translational modification Phosphoserine; by PKC. One copy of the IV repeat lies at 1460–1759 (IPRPLNKYQG…WEKFDPEATQ (300 aa)). A helical membrane pass occupies residues 1474 to 1497 (IVTRQAFDIIIMVLICLNMITMMV). Residues 1498–1508 (ETDGQSEEKTK) lie on the Extracellular side of the membrane. The chain crosses the membrane as a helical span at residues 1509–1532 (ILGRINQFFVAVFTGECVMKMFAL). Residues 1533-1538 (RQYYFT) are Cytoplasmic-facing. Residues 1539-1562 (NGWNVFDFIVVILSIGSLVFSAIL) form a helical membrane-spanning segment. Topologically, residues 1563-1574 (KSLESYFSPTLF) are extracellular. The helical; Voltage-sensor transmembrane segment at 1575-1596 (RVIRLARIGRILRLIRAAKGIR) threads the bilayer. Over 1597–1611 (TLLFALMMSLPALFN) the chain is Cytoplasmic. The helical transmembrane segment at 1612–1634 (IGLLLFLVMFIYSIFGMASFANV) threads the bilayer. At 1635 to 1648 (VEEAGIDDMFNFQT) the chain is on the extracellular side. Residues 1649-1671 (FGNSMLCLFQITTSAGWDGLLSP) constitute an intramembrane region (pore-forming). The Extracellular segment spans residues 1672 to 1699 (ILNTGPPYCDPNLSNNNTSKGNCGSPTV). Residues 1700 to 1724 (GIVFFTTYIIISFLIVVNMYIAVIL) traverse the membrane as a helical segment. Topologically, residues 1725–1959 (ENFNVATEES…SKEGDSPGPQ (235 aa)) are cytoplasmic. The region spanning 1853–1882 (EDISATVIQKAYRSYVLQRSLTLSNPLRVP) is the IQ domain. The segment at 1901 to 1959 (ANDSGRLPDKSETTSATSFPPSYDSVTRGLSDRVNISTSNSMHNEDEVTSKEGDSPGPQ) is disordered. Residues 1943 to 1959 (HNEDEVTSKEGDSPGPQ) are compositionally biased toward basic and acidic residues.

It belongs to the sodium channel (TC 1.A.1.10) family. Nav1.8/SCN10A subfamily. The channel consists of an ion conducting pore forming alpha-subunit regulated by one or more associated auxiliary subunits SCN1B, SCN2B and SCN3B; electrophysiological properties may vary depending on the type of the associated beta subunits. Found in a number of complexes with PRX, DYNLT1 and PDZD2. Interacts with proteins such as FSTL1, PRX, DYNLT1, PDZD2, S100A10 and many others. Interacts with NEDD4 and NEDD4L. Ubiquitinated by NEDD4L; which promotes its endocytosis. In terms of processing, phosphorylation at Ser-1453 by PKC in a highly conserved cytoplasmic loop slows inactivation of the sodium channel and reduces peak sodium currents. Post-translationally, lacks the cysteine which covalently binds the conotoxin GVIIJ. This cysteine (position 816) is speculated in other sodium channel subunits alpha to be implied in covalent binding with the sodium channel subunit beta-2 or beta-4.

The protein localises to the cell membrane. The catalysed reaction is Na(+)(in) = Na(+)(out). Functionally, tetrodotoxin-resistant channel that mediates the voltage-dependent sodium ion permeability of excitable membranes. Assuming opened or closed conformations in response to the voltage difference across the membrane, the protein forms a sodium-selective channel through which sodium ions may pass in accordance with their electrochemical gradient. Plays a role in neuropathic pain mechanisms. The sequence is that of Sodium channel protein type 10 subunit alpha (Scn10a) from Onychomys torridus (Southern grasshopper mouse).